A 176-amino-acid polypeptide reads, in one-letter code: Protein MAL2 (176 aa).

The Cytoplasmic portion of the chain corresponds to 1–34 (MSAGGASVPPPPNPAVSFPVPRVTLPAGPDILRT). In terms of domain architecture, MARVEL spans 31-175 (ILRTYSGAFV…SLGLALRRWR (145 aa)). Residues 35-55 (YSGAFVCLEILFGGLVWILVA) traverse the membrane as a helical segment. At 56 to 66 (SSNVPLPLLQG) the chain is on the lumenal side. Residues 67-87 (WVMFVSVTAFFFSLLFLGLFL) traverse the membrane as a helical segment. The Cytoplasmic segment spans residues 88–102 (SGMVTQIDANWNFLD). A helical membrane pass occupies residues 103–123 (FAYHFTVFVFYFGAFLLEAAA). At 124 to 149 (TSLHDLHYNITMTGQPLLNDNQYNIN) the chain is on the lumenal side. N-linked (GlcNAc...) asparagine glycosylation is present at Asn-132. A helical membrane pass occupies residues 150-170 (VAASIFAFMTTACYGCSLGLA). The Cytoplasmic portion of the chain corresponds to 171-176 (LRRWRP).

Belongs to the MAL family. Interacts with TPD52L2.

The protein resides in the cell membrane. It is found in the apical cell membrane. Member of the machinery of polarized transport. Required for the indirect transcytotic route at the step of the egress of the transcytosing cargo from perinuclear endosomes in order for it to travel to the apical surface via a raft-dependent pathway. In Pongo abelii (Sumatran orangutan), this protein is Protein MAL2 (MAL2).